The sequence spans 270 residues: SURF1-like protein (270 aa).

Helical transmembrane passes span 7 to 29 and 246 to 265; these read GFKLFFIFPVIAFGLGTWQVYRY and YIGTWYTLSASLFFIYFRYM.

Belongs to the SURF1 family.

The protein resides in the mitochondrion inner membrane. Functionally, probably involved in the biogenesis of the COX complex. The chain is SURF1-like protein (surf1-1) from Dictyostelium discoideum (Social amoeba).